A 567-amino-acid chain; its full sequence is Zinc finger protein 143 (567 aa).

7 consecutive C2H2-type zinc fingers follow at residues Phe-230–His-254, Tyr-260–His-284, Tyr-290–His-314, Phe-320–His-344, Tyr-350–His-374, Tyr-380–His-404, and Tyr-410–His-433. Polar residues predominate over residues Ser-506–Gly-520. Positions Ser-506–Pro-525 are disordered.

Belongs to the GLI C2H2-type zinc-finger protein family.

It is found in the nucleus. In terms of biological role, transcriptional activator. Activates the gene for selenocysteine tRNA (tRNAsec). Binds to the activator element (AE) motif of the selenocysteine tRNA gene promoter. The polypeptide is Zinc finger protein 143 (znf143) (Xenopus tropicalis (Western clawed frog)).